The primary structure comprises 1379 residues: DNA-directed RNA polymerase subunit beta (1379 aa).

This sequence belongs to the RNA polymerase beta chain family. In terms of assembly, the RNAP catalytic core consists of 2 alpha, 1 beta, 1 beta' and 1 omega subunit. When a sigma factor is associated with the core the holoenzyme is formed, which can initiate transcription.

The catalysed reaction is RNA(n) + a ribonucleoside 5'-triphosphate = RNA(n+1) + diphosphate. In terms of biological role, DNA-dependent RNA polymerase catalyzes the transcription of DNA into RNA using the four ribonucleoside triphosphates as substrates. In Campylobacter fetus subsp. fetus (strain 82-40), this protein is DNA-directed RNA polymerase subunit beta.